A 400-amino-acid chain; its full sequence is Tryptophan synthase beta chain (400 aa).

K90 is modified (N6-(pyridoxal phosphate)lysine).

The protein belongs to the TrpB family. Tetramer of two alpha and two beta chains. Requires pyridoxal 5'-phosphate as cofactor.

It carries out the reaction (1S,2R)-1-C-(indol-3-yl)glycerol 3-phosphate + L-serine = D-glyceraldehyde 3-phosphate + L-tryptophan + H2O. The protein operates within amino-acid biosynthesis; L-tryptophan biosynthesis; L-tryptophan from chorismate: step 5/5. In terms of biological role, the beta subunit is responsible for the synthesis of L-tryptophan from indole and L-serine. The protein is Tryptophan synthase beta chain of Alkaliphilus metalliredigens (strain QYMF).